Consider the following 480-residue polypeptide: UDP-N-acetylmuramate--L-alanine ligase (480 aa).

129–135 (GTHGKTT) lines the ATP pocket.

Belongs to the MurCDEF family.

The protein resides in the cytoplasm. It carries out the reaction UDP-N-acetyl-alpha-D-muramate + L-alanine + ATP = UDP-N-acetyl-alpha-D-muramoyl-L-alanine + ADP + phosphate + H(+). It participates in cell wall biogenesis; peptidoglycan biosynthesis. Cell wall formation. The protein is UDP-N-acetylmuramate--L-alanine ligase of Mannheimia succiniciproducens (strain KCTC 0769BP / MBEL55E).